A 546-amino-acid chain; its full sequence is Acyl-CoA ligase oryP (546 aa).

Residues 166–174 (TSGTTGAPK), 300–305 (QFWLNL), and Arg403 contribute to the ATP site. Residues 412–414 (WDH) and 482–484 (LLR) each bind CoA. Residue Lys499 participates in ATP binding.

It belongs to the ATP-dependent AMP-binding enzyme family.

The protein operates within secondary metabolite biosynthesis. Its function is as follows. Acyl-CoA ligase; part of the gene cluster that mediates the biosynthesis of oryzines, natural products with an unusual maleidride backbone. The two subunits of the fungal fatty acid synthase oryfasA and oryfasB probably form octenoic acid. This fatty acid is most likely activated by the acyl-CoA ligase oryP to give octenyl-CoA before the citrate synthase-like protein oryE catalyzes condensation with oxaloacetate to form tricarboxylic acid. The next steps of the pathways are conjectural, but a favorite possible route has been proposed, beginning with decarboxylation and concomitant dehydration by the decarboxylase oryM, followed by tautomerization, which may lead to the production of a diene intermediate. Reduction of this diene intermediate could give the known metabolite piliformic acid. On the pathway to oryzine B and oryzine A, however, hydroxylation of the diene by the alpha-ketoglutarate-dependent dioxygenase oryG and lactonisation by the lactonohydrolases oryH or oryL could give oryzine B directly. Finally, enoyl reduction by the dehydrogenase oryD would then convert oryzine B into oryzine A. This chain is Acyl-CoA ligase oryP, found in Aspergillus oryzae (strain ATCC 42149 / RIB 40) (Yellow koji mold).